The primary structure comprises 101 residues: Small ribosomal subunit protein bS18c (101 aa).

This sequence belongs to the bacterial ribosomal protein bS18 family. Part of the 30S ribosomal subunit.

It localises to the plastid. The protein localises to the chloroplast. The protein is Small ribosomal subunit protein bS18c of Gossypium hirsutum (Upland cotton).